The chain runs to 290 residues: MNFQNIIFELNNYWAEQGCVVQQPYDMEVGAGTFHPATLLRSLGPEPWKAAYAQPSRRPTDGRYGENPNRLQHYYQYQVVMKPSPLNIQELYLGSLKRFGLNLLEHDIRFVEDDWESPTLGASGLGWEIWLDGMEISQFTYFQQAGSIDLTPTTVEITYGLERIAMYLQGVESVYDIAWNDEVTYGEIFHQAEVEFSTFNFEEANVEKLTDFFNSFEEEAHKLIAKKLILPAYDYCLKCSHTFNLLDARKAISVTERTRYIGRIRNIARGVAEQYVIQRAELGHPLIKNK.

Belongs to the class-II aminoacyl-tRNA synthetase family. As to quaternary structure, tetramer of two alpha and two beta subunits.

Its subcellular location is the cytoplasm. The catalysed reaction is tRNA(Gly) + glycine + ATP = glycyl-tRNA(Gly) + AMP + diphosphate. This Desulfotalea psychrophila (strain LSv54 / DSM 12343) protein is Glycine--tRNA ligase alpha subunit.